A 753-amino-acid polypeptide reads, in one-letter code: 5-methyltetrahydropteroyltriglutamate--homocysteine methyltransferase (753 aa).

Residues 17-20 (RELK) and K117 each bind 5-methyltetrahydropteroyltri-L-glutamate. L-homocysteine contacts are provided by residues 431–433 (IGS) and E484. Residues 431–433 (IGS) and E484 each bind L-methionine. 5-methyltetrahydropteroyltri-L-glutamate contacts are provided by residues 515 to 516 (RC) and W561. D599 contacts L-homocysteine. Residue D599 participates in L-methionine binding. E605 contributes to the 5-methyltetrahydropteroyltri-L-glutamate binding site. Zn(2+)-binding residues include H641, C643, and E665. The active-site Proton donor is H694. C726 provides a ligand contact to Zn(2+).

The protein belongs to the vitamin-B12 independent methionine synthase family. Zn(2+) is required as a cofactor.

The catalysed reaction is 5-methyltetrahydropteroyltri-L-glutamate + L-homocysteine = tetrahydropteroyltri-L-glutamate + L-methionine. The protein operates within amino-acid biosynthesis; L-methionine biosynthesis via de novo pathway; L-methionine from L-homocysteine (MetE route): step 1/1. Its function is as follows. Catalyzes the transfer of a methyl group from 5-methyltetrahydrofolate to homocysteine resulting in methionine formation. The polypeptide is 5-methyltetrahydropteroyltriglutamate--homocysteine methyltransferase (Escherichia coli O6:K15:H31 (strain 536 / UPEC)).